A 233-amino-acid chain; its full sequence is Antilisterial bacteriocin subtilosin biosynthesis protein AlbG (233 aa).

Helical transmembrane passes span 7 to 27, 46 to 66, 116 to 136, 145 to 165, 176 to 198, and 203 to 220; these read FTLLLLLIGMAAYSFGWVQAV, GLLACTAALLMLPAFLYLHYV, TYVMAAVLCQVIIFGCMFEIV, TPPAFSMGLAMLLILYLLFCM, GSLFRKVFAGALAAAGIWWMLSF, and LLFLIILAAIQQIGSFIY.

The protein resides in the cell membrane. Involved in the production of the bacteriocin subtilosin. The protein is Antilisterial bacteriocin subtilosin biosynthesis protein AlbG (albG) of Bacillus subtilis (strain 168).